The primary structure comprises 158 residues: MGRFLLVTLSLLVVAFSLNGANSCCCPQDWLPRNGFCYKVFNHLKNWNDAEMYCRKFKPGCHLASLHSNADAVEFSEYITDYLTGQGHVWIGLRDTKKKYIWEWTDRSRTDFLPWRKDQPDHFNNEEFCVETVNFTGYLQWNDDSCTALRPFLCQCKY.

A signal peptide spans 1-23; that stretch reads MGRFLLVTLSLLVVAFSLNGANS. Intrachain disulfides connect C26–C37, C54–C154, and C129–C146. The region spanning 33–155 is the C-type lectin domain; the sequence is RNGFCYKVFN…CTALRPFLCQ (123 aa). Residues Q119, D121, and E127 each contribute to the Ca(2+) site. The Galactose-binding motif lies at 119–121; it reads QPD. N134 is a glycosylation site (N-linked (GlcNAc...) asparagine). The Ca(2+) site is built by N142 and D143.

This sequence belongs to the true venom lectin family. Homodimer; disulfide-linked. As to expression, expressed by the venom gland.

It localises to the secreted. In terms of biological role, galactose-binding lectin that binds to and agglutinates erythrocytes in a calcium-dependent manner. This Pseudechis porphyriacus (Red-bellied black snake) protein is C-type lectin galactose-binding isoform.